A 68-amino-acid chain; its full sequence is Conotoxin Ar5.3 (68 aa).

The N-terminal stretch at 1-19 (MLCLPVFIILLLLASPAAS) is a signal peptide. The propeptide occupies 20–53 (NPLEKRIQNDLIRAALEDADMENDPRSIIDSVKT).

This sequence belongs to the conotoxin T superfamily. In terms of processing, contains 2 disulfide bonds that can be either 'C1-C3, C2-C4' or 'C1-C4, C2-C3', since these disulfide connectivities have been observed for conotoxins with cysteine framework V (for examples, see AC P0DQQ7 and AC P81755). In terms of tissue distribution, expressed by the venom duct.

The protein localises to the secreted. The sequence is that of Conotoxin Ar5.3 from Conus arenatus (Sand-dusted cone).